The sequence spans 370 residues: Histidinol-phosphate aminotransferase (370 aa).

K229 carries the N6-(pyridoxal phosphate)lysine modification.

It belongs to the class-II pyridoxal-phosphate-dependent aminotransferase family. Histidinol-phosphate aminotransferase subfamily. In terms of assembly, homodimer. It depends on pyridoxal 5'-phosphate as a cofactor.

It carries out the reaction L-histidinol phosphate + 2-oxoglutarate = 3-(imidazol-4-yl)-2-oxopropyl phosphate + L-glutamate. The protein operates within amino-acid biosynthesis; L-histidine biosynthesis; L-histidine from 5-phospho-alpha-D-ribose 1-diphosphate: step 7/9. In Helicobacter hepaticus (strain ATCC 51449 / 3B1), this protein is Histidinol-phosphate aminotransferase.